A 75-amino-acid chain; its full sequence is UPF0235 protein MSMEG_3845 (75 aa).

It belongs to the UPF0235 family.

This is UPF0235 protein MSMEG_3845 from Mycolicibacterium smegmatis (strain ATCC 700084 / mc(2)155) (Mycobacterium smegmatis).